A 257-amino-acid polypeptide reads, in one-letter code: Galactitol 2-dehydrogenase (257 aa).

Residues 21–23, 67–68, asparagine 94, tyrosine 162, and lysine 166 each bind NAD(+); these read RAI and DV. Tyrosine 162 serves as the catalytic Proton acceptor.

The protein belongs to the short-chain dehydrogenases/reductases (SDR) family. In terms of assembly, homotetramer. Requires Mg(2+) as cofactor.

It catalyses the reaction galactitol + NAD(+) = keto-D-tagatose + NADH + H(+). Catalyzes the oxidation of galactitol to D-tagatose. Also catalyzes the oxidation of a wide range of substrates, including polyvalent aliphatic alcohols and polyols, to the corresponding ketones and ketoses. Galactitol is the preferred substrate. The polypeptide is Galactitol 2-dehydrogenase (Rhizobium johnstonii (strain DSM 114642 / LMG 32736 / 3841) (Rhizobium leguminosarum bv. viciae)).